The sequence spans 543 residues: Allantoate permease (543 aa).

Residues 1 to 80 (MSADASTNSN…PEEDRKLRWK (80 aa)) are Cytoplasmic-facing. A helical transmembrane segment spans residues 81 to 97 (IDYCMFPLMCILYAVQF). Residues 98 to 123 (MDKISTSSAAVMGLRTDLKMHGDQYS) are Extracellular-facing. Residues 124–145 (WVTSAFYFGYLFMNLGPVQFIF) traverse the membrane as a helical segment. The Cytoplasmic portion of the chain corresponds to 146–154 (QRTSHMSKM). A helical transmembrane segment spans residues 155–171 (LAVFIVIWGMLLALHAA). Over 172 to 178 (PTVKYPS) the chain is Extracellular. A helical membrane pass occupies residues 179-200 (FIVLRVLLGCAESVVTPCFTII). Topologically, residues 201 to 213 (TAQYWKTEEQFTR) are cytoplasmic. Residues 214-237 (VSIWFGMNGLGSILINAIAYGVYI) traverse the membrane as a helical segment. Residues 238–248 (HQDSYAIKGWR) lie on the Extracellular side of the membrane. Residues 249 to 269 (TLFVITGVITIFIGILIFLWI) traverse the membrane as a helical segment. Residues 270–317 (PDDPSKARFLSKREKLMVVQRIRSNQQGFGNHEIKKYQIIEALKDVRT) lie on the Cytoplasmic side of the membrane. Residues 318-342 (WLYFLFTVSSNIPNGGISSFMSILL) form a helical membrane-spanning segment. Topologically, residues 343 to 352 (NSDFGYSSKE) are extracellular. Residues 353–377 (TLLMGLPTGAVELVGCPLFGILAVY) traverse the membrane as a helical segment. Residues 378-389 (AANKKIPFWKYK) are Cytoplasmic-facing. Residues 390–411 (LSWAIFAAVLALIASCMLGFAT) form a helical membrane-spanning segment. At 412 to 417 (NSKKAR) the chain is on the extracellular side. Residues 418–435 (LAGAYLWYISPVSFICVL) traverse the membrane as a helical segment. The Cytoplasmic portion of the chain corresponds to 436-453 (SNISANSSGYSKKWTVSS). A helical transmembrane segment spans residues 454-472 (INLVAYAAANLAGPQTFIA). Over 473-482 (KQAPKYHGAK) the chain is Extracellular. Residues 483-504 (VAMVVCYAVMIVLLSILLIVNL) form a helical membrane-spanning segment. Topologically, residues 505–543 (RENKRRDKIAAERGFPEETENLEFSDLTDFENPNFRYTL) are cytoplasmic.

The protein belongs to the major facilitator superfamily. Allantoate permease family.

The protein resides in the membrane. In terms of biological role, component of the allantoate transport system. In Saccharomyces cerevisiae (strain ATCC 204508 / S288c) (Baker's yeast), this protein is Allantoate permease (DAL5).